The chain runs to 166 residues: Small ribosomal subunit protein bS6 (166 aa).

Composition is skewed to basic and acidic residues over residues 96–142 (HEEG…DRPP) and 149–166 (GGDR…GGAE). The tract at residues 96–166 (HEEGPSAMMQ…PREGFEGGAE (71 aa)) is disordered.

It belongs to the bacterial ribosomal protein bS6 family.

Binds together with bS18 to 16S ribosomal RNA. The polypeptide is Small ribosomal subunit protein bS6 (Mesorhizobium japonicum (strain LMG 29417 / CECT 9101 / MAFF 303099) (Mesorhizobium loti (strain MAFF 303099))).